We begin with the raw amino-acid sequence, 198 residues long: 3-isopropylmalate dehydratase small subunit (198 aa).

The protein belongs to the LeuD family. LeuD type 1 subfamily. As to quaternary structure, heterodimer of LeuC and LeuD.

The catalysed reaction is (2R,3S)-3-isopropylmalate = (2S)-2-isopropylmalate. The protein operates within amino-acid biosynthesis; L-leucine biosynthesis; L-leucine from 3-methyl-2-oxobutanoate: step 2/4. Its function is as follows. Catalyzes the isomerization between 2-isopropylmalate and 3-isopropylmalate, via the formation of 2-isopropylmaleate. The polypeptide is 3-isopropylmalate dehydratase small subunit (Mycolicibacterium paratuberculosis (strain ATCC BAA-968 / K-10) (Mycobacterium paratuberculosis)).